Reading from the N-terminus, the 460-residue chain is Serine--tRNA ligase (460 aa).

Positions 43 to 66 (AEGDGLRQERNEVSSKIGELKQDG) are enriched in basic and acidic residues. The tract at residues 43 to 81 (AEGDGLRQERNEVSSKIGELKQDGKDEEAQEAIDRSQEL) is disordered. 242 to 244 (TAE) provides a ligand contact to L-serine. ATP is bound by residues 273 to 275 (RRE) and valine 289. An L-serine-binding site is contributed by glutamate 296. 369–372 (EVSS) lines the ATP pocket. An L-serine-binding site is contributed by serine 405.

The protein belongs to the class-II aminoacyl-tRNA synthetase family. Type-1 seryl-tRNA synthetase subfamily. Homodimer. The tRNA molecule binds across the dimer.

It is found in the cytoplasm. It catalyses the reaction tRNA(Ser) + L-serine + ATP = L-seryl-tRNA(Ser) + AMP + diphosphate + H(+). The catalysed reaction is tRNA(Sec) + L-serine + ATP = L-seryl-tRNA(Sec) + AMP + diphosphate + H(+). The protein operates within aminoacyl-tRNA biosynthesis; selenocysteinyl-tRNA(Sec) biosynthesis; L-seryl-tRNA(Sec) from L-serine and tRNA(Sec): step 1/1. In terms of biological role, catalyzes the attachment of serine to tRNA(Ser). Is also probably able to aminoacylate tRNA(Sec) with serine, to form the misacylated tRNA L-seryl-tRNA(Sec), which will be further converted into selenocysteinyl-tRNA(Sec). This chain is Serine--tRNA ligase (serS), found in Haloarcula marismortui (strain ATCC 43049 / DSM 3752 / JCM 8966 / VKM B-1809) (Halobacterium marismortui).